The chain runs to 91 residues: UPF0512 protein M (91 aa).

Belongs to the UPF0512 family.

This is UPF0512 protein M from Dictyostelium discoideum (Social amoeba).